A 376-amino-acid chain; its full sequence is Succinyl-diaminopimelate desuccinylase (376 aa).

H66 is a binding site for Zn(2+). The active site involves D68. D99 is a binding site for Zn(2+). E133 serves as the catalytic Proton acceptor. The Zn(2+) site is built by E134, E162, and H348.

This sequence belongs to the peptidase M20A family. DapE subfamily. Homodimer. The cofactor is Zn(2+). Co(2+) is required as a cofactor.

The enzyme catalyses N-succinyl-(2S,6S)-2,6-diaminopimelate + H2O = (2S,6S)-2,6-diaminopimelate + succinate. Its pathway is amino-acid biosynthesis; L-lysine biosynthesis via DAP pathway; LL-2,6-diaminopimelate from (S)-tetrahydrodipicolinate (succinylase route): step 3/3. Its function is as follows. Catalyzes the hydrolysis of N-succinyl-L,L-diaminopimelic acid (SDAP), forming succinate and LL-2,6-diaminopimelate (DAP), an intermediate involved in the bacterial biosynthesis of lysine and meso-diaminopimelic acid, an essential component of bacterial cell walls. The protein is Succinyl-diaminopimelate desuccinylase of Xanthomonas oryzae pv. oryzae (strain MAFF 311018).